The following is an 88-amino-acid chain: Putative septation protein SpoVG (88 aa).

The protein belongs to the SpoVG family.

Its function is as follows. Could be involved in septation. The protein is Putative septation protein SpoVG of Caldicellulosiruptor bescii (strain ATCC BAA-1888 / DSM 6725 / KCTC 15123 / Z-1320) (Anaerocellum thermophilum).